The primary structure comprises 486 residues: Cardiolipin synthase A (486 aa).

A run of 2 helical transmembrane segments spans residues 3-23 (TFYT…IAGV) and 38-58 (MAWL…YLSF). 2 consecutive PLD phosphodiesterase domains span residues 219–246 (MDLR…VDPR) and 399–426 (EGGL…DMRS). Active-site residues include His-224, Lys-226, Asp-231, His-404, Lys-406, and Asp-411.

The protein belongs to the phospholipase D family. Cardiolipin synthase subfamily. ClsA sub-subfamily.

The protein localises to the cell inner membrane. It catalyses the reaction 2 a 1,2-diacyl-sn-glycero-3-phospho-(1'-sn-glycerol) = a cardiolipin + glycerol. Its function is as follows. Catalyzes the reversible phosphatidyl group transfer from one phosphatidylglycerol molecule to another to form cardiolipin (CL) (diphosphatidylglycerol) and glycerol. The protein is Cardiolipin synthase A of Citrobacter koseri (strain ATCC BAA-895 / CDC 4225-83 / SGSC4696).